The chain runs to 285 residues: ATP synthase gamma chain (285 aa).

This sequence belongs to the ATPase gamma chain family. As to quaternary structure, F-type ATPases have 2 components, CF(1) - the catalytic core - and CF(0) - the membrane proton channel. CF(1) has five subunits: alpha(3), beta(3), gamma(1), delta(1), epsilon(1). CF(0) has three main subunits: a, b and c.

The protein localises to the cell membrane. Functionally, produces ATP from ADP in the presence of a proton gradient across the membrane. The gamma chain is believed to be important in regulating ATPase activity and the flow of protons through the CF(0) complex. This is ATP synthase gamma chain from Geobacillus kaustophilus (strain HTA426).